The primary structure comprises 287 residues: ADP-dependent (S)-NAD(P)H-hydrate dehydratase (287 aa).

The YjeF C-terminal domain occupies 7–283 (GEDDVRKFVP…ELLPSVMKPF (277 aa)). (6S)-NADPHX-binding residues include alanine 42 and histidine 159. AMP is bound by residues 196–200 (KGPTD) and glycine 224. Aspartate 225 is a binding site for (6S)-NADPHX.

This sequence belongs to the NnrD/CARKD family. In terms of assembly, homotetramer. The cofactor is Mg(2+).

It carries out the reaction (6S)-NADHX + ADP = AMP + phosphate + NADH + H(+). The enzyme catalyses (6S)-NADPHX + ADP = AMP + phosphate + NADPH + H(+). Catalyzes the dehydration of the S-form of NAD(P)HX at the expense of ADP, which is converted to AMP. Together with NAD(P)HX epimerase, which catalyzes the epimerization of the S- and R-forms, the enzyme allows the repair of both epimers of NAD(P)HX, a damaged form of NAD(P)H that is a result of enzymatic or heat-dependent hydration. The polypeptide is ADP-dependent (S)-NAD(P)H-hydrate dehydratase (Cenarchaeum symbiosum (strain A)).